A 114-amino-acid polypeptide reads, in one-letter code: Hydrogenase maturation factor HypA (114 aa).

A Ni(2+)-binding site is contributed by His-2. Zn(2+) contacts are provided by Cys-73, Cys-76, Cys-89, and Cys-92.

This sequence belongs to the HypA/HybF family.

Its function is as follows. Involved in the maturation of [NiFe] hydrogenases. Required for nickel insertion into the metal center of the hydrogenase. This is Hydrogenase maturation factor HypA from Psychromonas ingrahamii (strain DSM 17664 / CCUG 51855 / 37).